The primary structure comprises 238 residues: Outer membrane protein A (238 aa).

Beta stranded transmembrane passes span 1–8, 13–21, 43–52, 57–64, and 83–91; these read LTAKLGYP, LDIYTRLGG, PVFAGGVEYA, IATRLEYQ, and LLSVGVSYR. 3 tandem repeats follow at residues 104-105, 106-107, and 108-109. Residues 104–109 are 3 X 2 AA tandem repeats of A-P; it reads APAPAP. Residues 111–238 form the OmpA-like domain; that stretch reads VQTKHFTLKS…RRVEIEVKGI (128 aa). Cysteine 212 and cysteine 224 are disulfide-bonded.

This sequence belongs to the outer membrane OOP (TC 1.B.6) superfamily. OmpA family. As to quaternary structure, monomer and homodimer.

It is found in the cell outer membrane. Its function is as follows. With TolR probably plays a role in maintaining the position of the peptidoglycan cell wall in the periplasm. Acts as a porin with low permeability that allows slow penetration of small solutes; an internal gate slows down solute passage. This is Outer membrane protein A from Citrobacter freundii.